The following is a 156-amino-acid chain: Keratin-associated protein 13-4 (156 aa).

Repeat copies occupy residues Cys-37–Asn-46, Cys-47–Ser-56, Cys-57–Thr-66, and Cys-73–Gly-82. Residues Cys-37–Gly-82 form a 4 X 10 AA approximate repeats region.

Belongs to the PMG family. In terms of assembly, interacts with hair keratins.

In terms of biological role, in the hair cortex, hair keratin intermediate filaments are embedded in an interfilamentous matrix, consisting of hair keratin-associated proteins (KRTAP), which are essential for the formation of a rigid and resistant hair shaft through their extensive disulfide bond cross-linking with abundant cysteine residues of hair keratins. The matrix proteins include the high-sulfur and high-glycine-tyrosine keratins. This Macaca fascicularis (Crab-eating macaque) protein is Keratin-associated protein 13-4 (KRTAP13-4).